The chain runs to 147 residues: 18 kDa antigen 1 (147 aa).

Residues 21-131 (TPTRPAVMPM…RPRKIAVGAA (111 aa)) enclose the sHSP domain.

This sequence belongs to the small heat shock protein (HSP20) family.

Functionally, not known. This protein is one of the major immune reactive proteins in mycobacteria. The protein is 18 kDa antigen 1 of Mycobacterium avium.